A 161-amino-acid chain; its full sequence is Troponin C, slow skeletal and cardiac muscles (161 aa).

An N-acetylmethionine modification is found at Met-1. 4 consecutive EF-hand domains span residues 16–51 (QKNE…LGQN), 52–87 (PTPE…CMKD), 92–127 (KSEE…TGET), and 128–161 (ITED…KGVE). The Ca(2+) site is built by Asp-65, Asp-67, Ser-69, Thr-71, and Glu-76. Ser-98 is subject to Phosphoserine. Residues Asp-105, Asn-107, Asp-109, Tyr-111, Glu-116, Asp-141, Asn-143, Asp-145, Arg-147, and Glu-152 each contribute to the Ca(2+) site.

It belongs to the troponin C family.

Its function is as follows. Troponin is the central regulatory protein of striated muscle contraction. Tn consists of three components: Tn-I which is the inhibitor of actomyosin ATPase, Tn-T which contains the binding site for tropomyosin and Tn-C. The binding of calcium to Tn-C abolishes the inhibitory action of Tn on actin filaments. This is Troponin C, slow skeletal and cardiac muscles (TNNC1) from Homo sapiens (Human).